The sequence spans 234 residues: Purine nucleoside phosphorylase DeoD-type (234 aa).

Histidine 4 lines the a purine D-ribonucleoside pocket. Phosphate contacts are provided by residues glycine 20, arginine 24, arginine 43, and 87–90; that span reads RVGT. A purine D-ribonucleoside is bound by residues 179-181 and 203-204; these read EME and SN.

The protein belongs to the PNP/UDP phosphorylase family. In terms of assembly, homohexamer; trimer of homodimers.

It catalyses the reaction a purine D-ribonucleoside + phosphate = a purine nucleobase + alpha-D-ribose 1-phosphate. The catalysed reaction is a purine 2'-deoxy-D-ribonucleoside + phosphate = a purine nucleobase + 2-deoxy-alpha-D-ribose 1-phosphate. Catalyzes the reversible phosphorolytic breakdown of the N-glycosidic bond in the beta-(deoxy)ribonucleoside molecules, with the formation of the corresponding free purine bases and pentose-1-phosphate. The protein is Purine nucleoside phosphorylase DeoD-type of Latilactobacillus sakei subsp. sakei (strain 23K) (Lactobacillus sakei subsp. sakei).